A 98-amino-acid chain; its full sequence is uncharacterized protein (98 aa).

This is an uncharacterized protein from Frog virus 3 (isolate Goorha) (FV-3).